We begin with the raw amino-acid sequence, 348 residues long: Phosphoribosylformylglycinamidine cyclo-ligase (348 aa).

Belongs to the AIR synthase family.

It localises to the cytoplasm. It catalyses the reaction 2-formamido-N(1)-(5-O-phospho-beta-D-ribosyl)acetamidine + ATP = 5-amino-1-(5-phospho-beta-D-ribosyl)imidazole + ADP + phosphate + H(+). It participates in purine metabolism; IMP biosynthesis via de novo pathway; 5-amino-1-(5-phospho-D-ribosyl)imidazole from N(2)-formyl-N(1)-(5-phospho-D-ribosyl)glycinamide: step 2/2. This chain is Phosphoribosylformylglycinamidine cyclo-ligase, found in Cereibacter sphaeroides (strain KD131 / KCTC 12085) (Rhodobacter sphaeroides).